Consider the following 1195-residue polypeptide: Probable beta-tubulin polyglutamylase (1195 aa).

Residues 1-110 (MSQKDIYNKY…QTEMTDNQNE (110 aa)) are disordered. Acidic residues-rich tracts occupy residues 17–27 (DQQEEDDDENQ) and 44–79 (QGED…EENN). Coiled-coil stretches lie at residues 59–103 (DEEQ…QQTE) and 144–260 (QDMD…QSEQ). A compositionally biased stretch (low complexity) spans 80–89 (QDQQNNSESN). Residues 90 to 110 (LQYDKTNQKNQQTEMTDNQNE) show a composition bias toward polar residues. Residues 281–343 (PKNDVDQYTG…NKKEQAKKQQ (63 aa)) form a disordered region. The span at 294-316 (DSGESDEEANNEDDDEDEDDESE) shows a compositional bias: acidic residues. Positions 322 to 334 (RKNKAQLLKKKNN) are enriched in basic residues. The TTL domain occupies 350–703 (KQTLVLNVAD…TCKAKNEIIN (354 aa)). ATP is bound by residues 500-503 (QRYL), K513, and D515. The tract at residues 674-756 (PLDSYIKKNT…GFERIFPMED (83 aa)) is c-MTBD region. Residues 783 to 862 (RNTKKVTEDP…ETIQCEDQEQ (80 aa)) form a disordered region. Over residues 825–849 (PNSQTTINKGIPGQNGQRPSSSQLN) the composition is skewed to polar residues. A compositionally biased stretch (acidic residues) spans 850–860 (EEGETIQCEDQ).

It localises to the cytoplasm. It is found in the cytoskeleton. The protein resides in the cell projection. The protein localises to the cilium. Its subcellular location is the cilium basal body. In terms of biological role, probable tubulin polyglutamylase with a strong preference for beta-tubulin. The sequence is that of Probable beta-tubulin polyglutamylase (Ttll6a) from Tetrahymena thermophila (strain SB210).